The chain runs to 546 residues: Methionine--tRNA ligase (546 aa).

The 'HIGH' region motif lies at 15 to 25; it reads PYANGPIHLGH. Zn(2+) is bound by residues Cys-146, Cys-149, Cys-159, and Cys-162. A 'KMSKS' region motif is present at residues 332–336; sequence KMSKS. Residue Lys-335 coordinates ATP.

It belongs to the class-I aminoacyl-tRNA synthetase family. MetG type 1 subfamily. In terms of assembly, monomer. Zn(2+) serves as cofactor.

The protein resides in the cytoplasm. The enzyme catalyses tRNA(Met) + L-methionine + ATP = L-methionyl-tRNA(Met) + AMP + diphosphate. Is required not only for elongation of protein synthesis but also for the initiation of all mRNA translation through initiator tRNA(fMet) aminoacylation. This Coxiella burnetii (strain Dugway 5J108-111) protein is Methionine--tRNA ligase.